Here is a 317-residue protein sequence, read N- to C-terminus: Protoheme IX farnesyltransferase (317 aa).

The next 6 membrane-spanning stretches (helical) occupy residues 25-45, 54-74, 117-137, 167-189, 244-264, and 281-301; these read FFAL…LVGM, PVIG…SGCL, LMLG…TIVF, IGQA…IIFI, LGFG…AMLV, and AAMS…SALL.

Belongs to the UbiA prenyltransferase family. Protoheme IX farnesyltransferase subfamily.

The protein localises to the cell inner membrane. It carries out the reaction heme b + (2E,6E)-farnesyl diphosphate + H2O = Fe(II)-heme o + diphosphate. It participates in porphyrin-containing compound metabolism; heme O biosynthesis; heme O from protoheme: step 1/1. Its function is as follows. Converts heme B (protoheme IX) to heme O by substitution of the vinyl group on carbon 2 of heme B porphyrin ring with a hydroxyethyl farnesyl side group. The sequence is that of Protoheme IX farnesyltransferase from Methylobacterium nodulans (strain LMG 21967 / CNCM I-2342 / ORS 2060).